The following is a 1132-amino-acid chain: BTB/POZ domain-containing protein 7 (1132 aa).

The span at 1 to 10 (MGANASNYPH) shows a compositional bias: polar residues. The segment at 1-24 (MGANASNYPHSCSPRVGGNSQAQQ) is disordered. A lipid anchor (N-myristoyl glycine) is attached at G2. BTB domains lie at 142-211 (TDVD…GMED) and 247-341 (YDVV…DLSV). In terms of domain architecture, BACK spans 413 to 479 (YGSKWVHRQA…WGEHQLMKRI (67 aa)). S722 carries the phosphoserine modification. 2 disordered regions span residues 897–1019 (LSQS…HLHR) and 1035–1132 (QRSD…KSAL). The segment covering 918–927 (RHTHTSRKKH) has biased composition (basic residues). 4 stretches are compositionally biased toward basic and acidic residues: residues 928-939 (TLEQKTDTRENP), 1000-1019 (KKQE…HLHR), 1083-1093 (PEERSGRRLAD), and 1105-1114 (TDLEREDSIS). S1012 carries the post-translational modification Phosphoserine.

Its subcellular location is the nucleus. Its function is as follows. Acts as a mediator of epithelial dynamics and organ branching by promoting cleft progression. Induced following accumulation of fibronectin in forming clefts, leading to local expression of the cell-scattering SNAIL2 and suppression of E-cadherin levels, thereby altering cell morphology and reducing cell-cell adhesion. This stimulates cell separation at the base of forming clefts by local, dynamic intercellular gap formation and promotes cleft progression. The protein is BTB/POZ domain-containing protein 7 (BTBD7) of Homo sapiens (Human).